The primary structure comprises 593 residues: Myc box-dependent-interacting protein 1 (593 aa).

Alanine 2 carries the post-translational modification N-acetylalanine. The tract at residues 2 to 122 (AEMGSKGVTA…DYHQKLVDQA (121 aa)) is interaction with BIN2. 2 coiled-coil regions span residues 15 to 42 (ASNVQKKLTRAQEKVLQKLGKADETKDE) and 193 to 267 (HLVA…NDVL). The BAR domain occupies 29–276 (VLQKLGKADE…LVGLEKQHGS (248 aa)). Disordered stretches follow at residues 280 to 354 (TVKA…KEVK) and 400 to 488 (PVTS…AASS). Phosphoserine occurs at positions 296, 298, and 303. Phosphothreonine occurs at positions 307 and 323. At serine 331 the chain carries Phosphoserine. A clathrin-binding region spans residues 378 to 421 (FEAPGPFSEQASLLDLDFDPLPPVTSPVKAPTPSGQSIPWDLWE). In terms of domain architecture, SH3 spans 520 to 593 (GFMFKVQAQH…FPENFTERVP (74 aa)).

As to quaternary structure, heterodimer with AMPH. Binds SH3GLB1. Interacts (via SH3 domain) with DNM1. Interacts with SYNJ1. Interacts (via SH3 domain) with DNM2. Isoform IIA interacts with CLTC. Isoform IIB does not interact with CLTC. Isoform IIC1 does not interact with CLTC. Isoform IIC2 does not interact with CLTC. Interacts with AP2A2. Interacts with AP2B1. Interacts with MYC (via N-terminal transactivation domain); the interaction requires the integrity of the conserved MYC box regions 1 and 2. Interacts with BIN2. Interacts with SNX4. Interacts (via BAR domain) with BACE1. Binds (via BAR domain) F-actin. In terms of assembly, (Microbial infection) Interacts (SH3 domain) with HCV NS5A. Post-translationally, phosphorylated by protein kinase C. Ubiquitous. Highest expression in the brain and muscle. Expressed in oligodendrocytes. Isoform IIA is expressed only in the brain, where it is detected in the gray matter, but not in the white matter. Isoform BIN1 is widely expressed with highest expression in skeletal muscle.

It is found in the nucleus. Its subcellular location is the cytoplasm. The protein resides in the endosome. It localises to the cell membrane. The protein localises to the sarcolemma. It is found in the T-tubule. In terms of biological role, is a key player in the control of plasma membrane curvature, membrane shaping and membrane remodeling. Required in muscle cells for the formation of T-tubules, tubular invaginations of the plasma membrane that function in depolarization-contraction coupling. Is a negative regulator of endocytosis. Is also involved in the regulation of intracellular vesicles sorting, modulation of BACE1 trafficking and the control of amyloid-beta production. In neuronal circuits, endocytosis regulation may influence the internalization of PHF-tau aggregates. May be involved in the regulation of MYC activity and the control cell proliferation. Has actin bundling activity and stabilizes actin filaments against depolymerization in vitro. This chain is Myc box-dependent-interacting protein 1 (BIN1), found in Homo sapiens (Human).